Here is a 249-residue protein sequence, read N- to C-terminus: MKVTLVGNGRMGQQIAGIVNASDANVIHKVLDVSDAVTPEVFEGSDAIIDFTVRDAFLANYKAMIASGVPVVVGTTGWDELMPQIAEEVNAAGSSMLYSANFSLGVNVFFRTLREAARLIAPFEQFDIALSEQHHTGKADFPSGTAIKAAQEVLNNNPRKRTIVRELEDGKKLQSDELQVSSIRLGTVFGVHSAIIDSESDTIELTHTAKNRTGFASGAVRAAEWLAQQHAAKPGFYTMDDFLNDLFSA.

NAD(+) contacts are provided by residues D32, 74–76 (GTT), and 99–102 (SANF). The Proton donor/acceptor role is filled by H134. H135 lines the (S)-2,3,4,5-tetrahydrodipicolinate pocket. The active-site Proton donor is K138. 144 to 145 (GT) contributes to the (S)-2,3,4,5-tetrahydrodipicolinate binding site.

It belongs to the DapB family.

The protein resides in the cytoplasm. The enzyme catalyses (S)-2,3,4,5-tetrahydrodipicolinate + NAD(+) + H2O = (2S,4S)-4-hydroxy-2,3,4,5-tetrahydrodipicolinate + NADH + H(+). It carries out the reaction (S)-2,3,4,5-tetrahydrodipicolinate + NADP(+) + H2O = (2S,4S)-4-hydroxy-2,3,4,5-tetrahydrodipicolinate + NADPH + H(+). The protein operates within amino-acid biosynthesis; L-lysine biosynthesis via DAP pathway; (S)-tetrahydrodipicolinate from L-aspartate: step 4/4. In terms of biological role, catalyzes the conversion of 4-hydroxy-tetrahydrodipicolinate (HTPA) to tetrahydrodipicolinate. This chain is 4-hydroxy-tetrahydrodipicolinate reductase, found in Chlorobaculum parvum (strain DSM 263 / NCIMB 8327) (Chlorobium vibrioforme subsp. thiosulfatophilum).